Here is a 767-residue protein sequence, read N- to C-terminus: Phosphoribosylformylglycinamidine synthase subunit PurL (767 aa).

His-46 is an active-site residue. Positions 49 and 88 each coordinate ATP. Glu-90 contributes to the Mg(2+) binding site. Substrate contacts are provided by residues 91-94 (SHNH) and Arg-113. His-92 functions as the Proton acceptor in the catalytic mechanism. Mg(2+) is bound at residue Asp-114. Substrate is bound at residue Gln-237. Residue Asp-265 coordinates Mg(2+). Residue 309 to 311 (ESQ) participates in substrate binding. ATP is bound by residues Asp-498 and Gly-535. Asn-536 contributes to the Mg(2+) binding site. Ser-538 contacts substrate.

This sequence belongs to the FGAMS family. In terms of assembly, monomer. Part of the FGAM synthase complex composed of 1 PurL, 1 PurQ and 2 PurS subunits.

The protein resides in the cytoplasm. The enzyme catalyses N(2)-formyl-N(1)-(5-phospho-beta-D-ribosyl)glycinamide + L-glutamine + ATP + H2O = 2-formamido-N(1)-(5-O-phospho-beta-D-ribosyl)acetamidine + L-glutamate + ADP + phosphate + H(+). It functions in the pathway purine metabolism; IMP biosynthesis via de novo pathway; 5-amino-1-(5-phospho-D-ribosyl)imidazole from N(2)-formyl-N(1)-(5-phospho-D-ribosyl)glycinamide: step 1/2. Its function is as follows. Part of the phosphoribosylformylglycinamidine synthase complex involved in the purines biosynthetic pathway. Catalyzes the ATP-dependent conversion of formylglycinamide ribonucleotide (FGAR) and glutamine to yield formylglycinamidine ribonucleotide (FGAM) and glutamate. The FGAM synthase complex is composed of three subunits. PurQ produces an ammonia molecule by converting glutamine to glutamate. PurL transfers the ammonia molecule to FGAR to form FGAM in an ATP-dependent manner. PurS interacts with PurQ and PurL and is thought to assist in the transfer of the ammonia molecule from PurQ to PurL. This chain is Phosphoribosylformylglycinamidine synthase subunit PurL, found in Anaeromyxobacter sp. (strain Fw109-5).